A 349-amino-acid chain; its full sequence is 3-isopropylmalate dehydrogenase (349 aa).

Residues Arg91, Arg101, Arg129, and Asp219 each coordinate substrate. Residues Asp219, Asp243, and Asp247 each contribute to the Mg(2+) site. An NAD(+)-binding site is contributed by 277-289 (GSAPDIAGLGKAN).

It belongs to the isocitrate and isopropylmalate dehydrogenases family. LeuB type 1 subfamily. Homodimer. Requires Mg(2+) as cofactor. Mn(2+) serves as cofactor.

It localises to the cytoplasm. It carries out the reaction (2R,3S)-3-isopropylmalate + NAD(+) = 4-methyl-2-oxopentanoate + CO2 + NADH. It participates in amino-acid biosynthesis; L-leucine biosynthesis; L-leucine from 3-methyl-2-oxobutanoate: step 3/4. Its function is as follows. Catalyzes the oxidation of 3-carboxy-2-hydroxy-4-methylpentanoate (3-isopropylmalate) to 3-carboxy-4-methyl-2-oxopentanoate. The product decarboxylates to 4-methyl-2 oxopentanoate. The sequence is that of 3-isopropylmalate dehydrogenase from Zymomonas mobilis subsp. mobilis (strain ATCC 31821 / ZM4 / CP4).